The sequence spans 537 residues: Probable glucomannan 4-beta-mannosyltransferase 15 (537 aa).

Residues 50 to 70 (FIVPLFKCIVVMCLIISLLVF) form a helical membrane-spanning segment. Asp150 is a catalytic residue. The substrate site is built by Asp209 and Asp211. The active site involves Asp303. 4 helical membrane-spanning segments follow: residues 382–402 (IVVH…SVFL), 418–438 (VITL…IFWV), 494–514 (EMMM…FGNA), and 515–535 (FLYL…VGFV).

This sequence belongs to the glycosyltransferase 2 family. Plant cellulose synthase-like A subfamily.

The protein localises to the golgi apparatus membrane. It catalyses the reaction GDP-mannose + (glucomannan)n = GDP + (glucomannan)n+1.. In terms of biological role, probable mannan synthase which consists of a 4-beta-mannosyltransferase activity on mannan using GDP-mannose. The beta-1,4-mannan product is the backbone for galactomannan synthesis by galactomannan galactosyltransferase. Galactomannan is a noncellulosic polysaccharides of plant cell wall. The chain is Probable glucomannan 4-beta-mannosyltransferase 15 from Arabidopsis thaliana (Mouse-ear cress).